The primary structure comprises 132 residues: Small ribosomal subunit protein uS8 (132 aa).

This sequence belongs to the universal ribosomal protein uS8 family. In terms of assembly, part of the 30S ribosomal subunit. Contacts proteins S5 and S12.

One of the primary rRNA binding proteins, it binds directly to 16S rRNA central domain where it helps coordinate assembly of the platform of the 30S subunit. This is Small ribosomal subunit protein uS8 from Brucella abortus (strain S19).